The sequence spans 160 residues: uncharacterized protein (160 aa).

This is an uncharacterized protein from Mycobacterium tuberculosis (strain ATCC 25618 / H37Rv).